The chain runs to 417 residues: Lipoyl synthase, mitochondrial (417 aa).

A mitochondrion-targeting transit peptide spans 1–26 (MAVCARGLRCLGTPAVSLRLAASRSY). The disordered stretch occupies residues 27–61 (ATTTPPDPAIPNTPGAAATSSPAKRPRTSFQDKLN). Polar residues predominate over residues 44–58 (ATSSPAKRPRTSFQD). 7 residues coordinate [4Fe-4S] cluster: Cys-134, Cys-139, Cys-145, Cys-165, Cys-169, Cys-172, and Ser-380. The Radical SAM core domain occupies 148 to 369 (GGSKSAATAT…KEKALEMGFL (222 aa)). Positions 398–417 (ESTGPGSASVQDVATGDLVR) are disordered.

This sequence belongs to the radical SAM superfamily. Lipoyl synthase family. [4Fe-4S] cluster is required as a cofactor.

It is found in the mitochondrion. The catalysed reaction is [[Fe-S] cluster scaffold protein carrying a second [4Fe-4S](2+) cluster] + N(6)-octanoyl-L-lysyl-[protein] + 2 oxidized [2Fe-2S]-[ferredoxin] + 2 S-adenosyl-L-methionine + 4 H(+) = [[Fe-S] cluster scaffold protein] + N(6)-[(R)-dihydrolipoyl]-L-lysyl-[protein] + 4 Fe(3+) + 2 hydrogen sulfide + 2 5'-deoxyadenosine + 2 L-methionine + 2 reduced [2Fe-2S]-[ferredoxin]. It participates in protein modification; protein lipoylation via endogenous pathway; protein N(6)-(lipoyl)lysine from octanoyl-[acyl-carrier-protein]: step 2/2. Its function is as follows. Catalyzes the radical-mediated insertion of two sulfur atoms into the C-6 and C-8 positions of the octanoyl moiety bound to the lipoyl domains of lipoate-dependent enzymes, thereby converting the octanoylated domains into lipoylated derivatives. The polypeptide is Lipoyl synthase, mitochondrial (Uncinocarpus reesii (strain UAMH 1704)).